A 562-amino-acid polypeptide reads, in one-letter code: NAD-dependent malic enzyme 1 (562 aa).

Tyrosine 101 functions as the Proton donor in the catalytic mechanism. Arginine 154 contacts NAD(+). Lysine 172 (proton acceptor) is an active-site residue. Residues glutamate 243, aspartate 244, and aspartate 267 each coordinate a divalent metal cation. NAD(+) is bound by residues aspartate 267 and asparagine 415.

Belongs to the malic enzymes family. Homotetramer. Mg(2+) serves as cofactor. Requires Mn(2+) as cofactor.

It catalyses the reaction (S)-malate + NAD(+) = pyruvate + CO2 + NADH. The catalysed reaction is oxaloacetate + H(+) = pyruvate + CO2. The polypeptide is NAD-dependent malic enzyme 1 (Vibrio vulnificus (strain YJ016)).